We begin with the raw amino-acid sequence, 378 residues long: MATTASNHYNILTSSPSIVHSEPGSMQQATAYRDAQTLLQSDYSLQSNSHPLSHAHQWITALSHGEGGPWSSSPLGEQDIKPAVQSPRDEMHNSSNLQHQSRPPHLVHQTHGNHHDSRAWRTTTAAHIPSMATSNGQSLIYSQPSFSVNGLIPGSGQGIHHHSMRDAHEDHHSPHLSDHGHPPSQHQHQSHQSHHDHSDEDTPTSDDLEQFAKQFKQRRIKLGFTQADVGLALGTLYGNVFSQTTICRFEALQLSFKNMCKLKPLLNKWLEEADSTSGSPTSLDKIAAQGRKRKKRTSIEVSVKGALESHFLKCPKPAASEITSLADSLQLEKEVVRVWFCNRRQKEKRMTPPGGPLPGTEDVYGDTPPHHGVQTPVQ.

Disordered stretches follow at residues 1-28 (MATT…SMQQ), 86-118 (SPRD…HDSR), and 151-205 (LIPG…TPTS). The segment covering 164 to 181 (MRDAHEDHHSPHLSDHGH) has biased composition (basic and acidic residues). A POU-specific domain is found at 200 to 274 (EDTPTSDDLE…LLNKWLEEAD (75 aa)). S279 bears the Phosphoserine mark. Residues 292 to 351 (KRKKRTSIEVSVKGALESHFLKCPKPAASEITSLADSLQLEKEVVRVWFCNRRQKEKRMT) constitute a DNA-binding region (homeobox). The disordered stretch occupies residues 347-378 (EKRMTPPGGPLPGTEDVYGDTPPHHGVQTPVQ).

This sequence belongs to the POU transcription factor family. Class-3 subfamily. In terms of tissue distribution, predominantly expressed in the central nervous system, with strong expression in the cerebellum.

The protein resides in the nucleus. Transcription factor that may play important roles in patterning the embryonic brain. This is POU domain, class 3, transcription factor 2 (pou3f2) from Danio rerio (Zebrafish).